An 806-amino-acid chain; its full sequence is Lon protease 1 (806 aa).

Residues 31–235 (VPLIAVPSHP…KVLELIYEEL (205 aa)) form the Lon N-terminal domain. 389–396 (GPPGVGKT) contributes to the ATP binding site. One can recognise a Lon proteolytic domain in the interval 626-806 (AMYSGMVMGL…NMREVIKLLF (181 aa)). Catalysis depends on residues Ser-714 and Lys-757.

This sequence belongs to the peptidase S16 family. In terms of assembly, homohexamer. Organized in a ring with a central cavity.

It is found in the cytoplasm. The enzyme catalyses Hydrolysis of proteins in presence of ATP.. Functionally, ATP-dependent serine protease that mediates the selective degradation of mutant and abnormal proteins as well as certain short-lived regulatory proteins. Required for cellular homeostasis and for survival from DNA damage and developmental changes induced by stress. Degrades polypeptides processively to yield small peptide fragments that are 5 to 10 amino acids long. Binds to DNA in a double-stranded, site-specific manner. This is Lon protease 1 from Borreliella burgdorferi (strain ATCC 35210 / DSM 4680 / CIP 102532 / B31) (Borrelia burgdorferi).